The chain runs to 184 residues: ATP synthase subunit b (184 aa).

Residues 19–39 (IIVGVILVLLLTWLIAKAVVP) traverse the membrane as a helical segment.

It belongs to the ATPase B chain family. As to quaternary structure, F-type ATPases have 2 components, F(1) - the catalytic core - and F(0) - the membrane proton channel. F(1) has five subunits: alpha(3), beta(3), gamma(1), delta(1), epsilon(1). F(0) has three main subunits: a(1), b(2) and c(10-14). The alpha and beta chains form an alternating ring which encloses part of the gamma chain. F(1) is attached to F(0) by a central stalk formed by the gamma and epsilon chains, while a peripheral stalk is formed by the delta and b chains.

The protein localises to the cell membrane. Functionally, f(1)F(0) ATP synthase produces ATP from ADP in the presence of a proton or sodium gradient. F-type ATPases consist of two structural domains, F(1) containing the extramembraneous catalytic core and F(0) containing the membrane proton channel, linked together by a central stalk and a peripheral stalk. During catalysis, ATP synthesis in the catalytic domain of F(1) is coupled via a rotary mechanism of the central stalk subunits to proton translocation. Component of the F(0) channel, it forms part of the peripheral stalk, linking F(1) to F(0). The chain is ATP synthase subunit b from Cutibacterium acnes (strain DSM 16379 / KPA171202) (Propionibacterium acnes).